A 375-amino-acid chain; its full sequence is Serpin B5 (375 aa).

4 N-linked (GlcNAc...) asparagine glycosylation sites follow: Asn99, Asn133, Asn188, and Asn361.

Belongs to the serpin family. Ov-serpin subfamily. Interacts with IRF6. In terms of tissue distribution, normal mammary epithelial cells.

It is found in the secreted. Its subcellular location is the extracellular space. In terms of biological role, tumor suppressor. It blocks the growth, invasion, and metastatic properties of mammary tumors. As it does not undergo the S (stressed) to R (relaxed) conformational transition characteristic of active serpins, it exhibits no serine protease inhibitory activity. In Homo sapiens (Human), this protein is Serpin B5 (SERPINB5).